We begin with the raw amino-acid sequence, 520 residues long: Transactivator/viroplasmin protein (520 aa).

A disordered region spans residues 487–520 (QNASADSGPKDGPPPTRSIVEKEDVPTTSSKQVD).

This sequence belongs to the caulimoviridae viroplasmin family.

The protein resides in the host cytoplasm. Enhances the ribosomal termination-reinitiation event leading to the translation of major open reading frames on the polycistronic viral RNAs. This is Transactivator/viroplasmin protein from Arabidopsis thaliana (Mouse-ear cress).